Reading from the N-terminus, the 1824-residue chain is E3 ubiquitin-protein ligase UBR1 (1824 aa).

A UBR-type zinc finger spans residues 107–178 (TVCGKVFKNG…KDQYCELHLA (72 aa)). Disordered stretches follow at residues 1006–1043 (KQAP…ENRA) and 1073–1093 (ADTE…DWED). A compositionally biased stretch (basic and acidic residues) spans 1033 to 1043 (EQAREERENRA). An RING-type; atypical zinc finger spans residues 1126–1220 (FKCILCFENC…VEFQCPYCRT (95 aa)).

This sequence belongs to the E3 ubiquitin-protein ligase UBR1-like family.

It catalyses the reaction S-ubiquitinyl-[E2 ubiquitin-conjugating enzyme]-L-cysteine + [acceptor protein]-L-lysine = [E2 ubiquitin-conjugating enzyme]-L-cysteine + N(6)-ubiquitinyl-[acceptor protein]-L-lysine.. The protein operates within protein modification; protein ubiquitination. Its function is as follows. E3 ubiquitin-protein ligase which is a component of the N-end rule pathway. Recognizes and binds to proteins bearing specific N-terminal residues that are destabilizing according to the N-end rule, leading to their ubiquitination and subsequent degradation. This chain is E3 ubiquitin-protein ligase UBR1, found in Drosophila melanogaster (Fruit fly).